A 668-amino-acid polypeptide reads, in one-letter code: Transketolase 2 (668 aa).

H26 contributes to the substrate binding site. Thiamine diphosphate-binding positions include H66 and 114 to 116 (GPL). A Mg(2+)-binding site is contributed by D155. 2 residues coordinate thiamine diphosphate: G156 and N185. N185 and I187 together coordinate Mg(2+). The substrate site is built by H261, R358, and S385. H261 provides a ligand contact to thiamine diphosphate. Catalysis depends on E413, which acts as the Proton donor. F439 lines the thiamine diphosphate pocket. H463, D471, and R522 together coordinate substrate.

It belongs to the transketolase family. In terms of assembly, homodimer. Mg(2+) serves as cofactor. Ca(2+) is required as a cofactor. Requires Mn(2+) as cofactor. It depends on Co(2+) as a cofactor. The cofactor is thiamine diphosphate.

The enzyme catalyses D-sedoheptulose 7-phosphate + D-glyceraldehyde 3-phosphate = aldehydo-D-ribose 5-phosphate + D-xylulose 5-phosphate. Functionally, catalyzes the transfer of a two-carbon ketol group from a ketose donor to an aldose acceptor, via a covalent intermediate with the cofactor thiamine pyrophosphate. This Pasteurella multocida (strain Pm70) protein is Transketolase 2 (tktB).